A 473-amino-acid polypeptide reads, in one-letter code: Alliin lyase 2 (473 aa).

The N-terminal stretch at 1 to 15 (MICLVILTCIIMSNS) is a signal peptide. A propeptide spanning residues 16-25 (FVNNNNMVQA) is cleaved from the precursor. Positions 38–84 (EAVANINCSEHGRAFLDGIISEGSPKCECNTCYTGPDCSEKIQGCSA) constitute an EGF-like; atypical domain. N-linked (GlcNAc...) asparagine glycosylation occurs at Asn-44. Intrachain disulfides connect Cys-45/Cys-64, Cys-66/Cys-75, and Cys-69/Cys-82. 117–125 (YFFNPVSNF) is a chloride binding site. Asn-171 and Asn-216 each carry an N-linked (GlcNAc...) asparagine glycan. Residue Lys-276 is modified to N6-(pyridoxal phosphate)lysine. An N-linked (GlcNAc...) asparagine glycan is attached at Asn-353. Cysteines 393 and 401 form a disulfide.

The protein belongs to the alliinase family. In terms of assembly, homodimer. Pyridoxal 5'-phosphate is required as a cofactor. Post-translationally, glycosylated. As to expression, high expression in bulbs, lower expression in leaves, and no expression in roots.

Its subcellular location is the vacuole. It carries out the reaction an S-alkyl-L-cysteine S-oxide = an S-alkyl sulfenate + 2-aminoprop-2-enoate. It catalyses the reaction alliin = allylsulfenate + 2-aminoprop-2-enoate. In terms of biological role, able to cleave the C-S bond of sulfoxide derivatives of Cys to produce allicin, thus giving rise to all sulfur compounds which are responsible for most of the properties of garlic, such as the specific smell and flavor as well as the health benefits like blood lipid or blood pressure lowering. This chain is Alliin lyase 2, found in Allium sativum (Garlic).